A 183-amino-acid polypeptide reads, in one-letter code: Adenine phosphoribosyltransferase (183 aa).

This sequence belongs to the purine/pyrimidine phosphoribosyltransferase family. In terms of assembly, homodimer.

It is found in the cytoplasm. It catalyses the reaction AMP + diphosphate = 5-phospho-alpha-D-ribose 1-diphosphate + adenine. Its pathway is purine metabolism; AMP biosynthesis via salvage pathway; AMP from adenine: step 1/1. In terms of biological role, catalyzes a salvage reaction resulting in the formation of AMP, that is energically less costly than de novo synthesis. This chain is Adenine phosphoribosyltransferase, found in Shewanella sp. (strain ANA-3).